Consider the following 667-residue polypeptide: Ribosomal oxygenase 1 (667 aa).

M1 bears the N-acetylmethionine mark. Over residues 1–11 (MDGLRASAGLL) the composition is skewed to low complexity. Residues 1-99 (MDGLRASAGL…ATGREPHGQL (99 aa)) are disordered. Basic residues-rich tracts occupy residues 12–22 (RRGRLRRRRQQ) and 35–44 (RPRKIRRQLR). Residues S61, S64, and S108 each carry the phosphoserine modification. The JmjC domain occupies 322 to 467 (CSLRLLCPQA…DFLEAVLPLA (146 aa)). Positions 368, 370, and 433 each coordinate Fe cation.

Belongs to the ROX family. NO66 subfamily. In terms of assembly, interacts with SP7/OSX; the interaction is direct. Interacts with MYC. Interacts with PHF19; leading to its recruitment to H3K36me3 sites. The cofactor is Fe(2+).

The protein resides in the nucleus. It localises to the nucleolus. Its subcellular location is the nucleoplasm. The enzyme catalyses N(6),N(6)-dimethyl-L-lysyl(36)-[histone H3] + 2 2-oxoglutarate + 2 O2 = L-lysyl(36)-[histone H3] + 2 formaldehyde + 2 succinate + 2 CO2. It catalyses the reaction N(6)-methyl-L-lysyl-[protein] + 2-oxoglutarate + O2 = L-lysyl-[protein] + formaldehyde + succinate + CO2. It carries out the reaction L-histidyl-[protein] + 2-oxoglutarate + O2 = (3S)-3-hydroxy-L-histidyl-[protein] + succinate + CO2. Oxygenase that can act as both a histone lysine demethylase and a ribosomal histidine hydroxylase. Specifically demethylates 'Lys-4' (H3K4me) and 'Lys-36' (H3K36me) of histone H3, thereby playing a central role in histone code. Preferentially demethylates trimethylated H3 'Lys-4' (H3K4me3) and monomethylated H3 'Lys-4' (H3K4me1) residues, while it has weaker activity for dimethylated H3 'Lys-36' (H3K36me2). Acts as a regulator of osteoblast differentiation via its interaction with SP7/OSX by demethylating H3K4me and H3K36me, thereby inhibiting SP7/OSX-mediated promoter activation. Also catalyzes demethylation of non-histone proteins, such as CGAS: demethylation of monomethylated CGAS promotes interaction between CGAS and PARP1, followed by PARP1 inactivation. Also catalyzes the hydroxylation of 60S ribosomal protein L8 on 'His-216', thereby playing a role in ribosome biogenesis. Participates in MYC-induced transcriptional activation. This Bos taurus (Bovine) protein is Ribosomal oxygenase 1 (RIOX1).